The primary structure comprises 351 residues: Phosphoribosylformylglycinamidine cyclo-ligase (351 aa).

This sequence belongs to the AIR synthase family.

It is found in the cytoplasm. The enzyme catalyses 2-formamido-N(1)-(5-O-phospho-beta-D-ribosyl)acetamidine + ATP = 5-amino-1-(5-phospho-beta-D-ribosyl)imidazole + ADP + phosphate + H(+). It functions in the pathway purine metabolism; IMP biosynthesis via de novo pathway; 5-amino-1-(5-phospho-D-ribosyl)imidazole from N(2)-formyl-N(1)-(5-phospho-D-ribosyl)glycinamide: step 2/2. This Burkholderia vietnamiensis (strain G4 / LMG 22486) (Burkholderia cepacia (strain R1808)) protein is Phosphoribosylformylglycinamidine cyclo-ligase.